Here is a 772-residue protein sequence, read N- to C-terminus: Carnitine O-palmitoyltransferase 1, muscle isoform (772 aa).

Over 1–47 (MAEAHQAVAFQFTVTPDGVDFRLSREALKHVYLSGINSWKKRLIRIK) the chain is Cytoplasmic. Residues 48–73 (NGILRGVYPGSPTSWLVVIMATVGSS) form a helical membrane-spanning segment. Topologically, residues 74 to 102 (FCNVDISLGLVSCIQRCLPQGCGPYQTPQ) are mitochondrial intermembrane. Residues 103–122 (TRALLSMAIFSTGVWVTGIF) traverse the membrane as a helical segment. The Cytoplasmic segment spans residues 123–772 (FFRQTLKLLL…DLFQVPKAYS (650 aa)). His-473 functions as the Proton acceptor in the catalytic mechanism. 555 to 567 (GKGLIKKCRTSPD) is a CoA binding site. The (R)-carnitine site is built by Tyr-589 and Thr-602.

It belongs to the carnitine/choline acetyltransferase family. Strong expression in heart and skeletal muscle. No expression in liver and kidney.

It localises to the mitochondrion outer membrane. The catalysed reaction is (R)-carnitine + hexadecanoyl-CoA = O-hexadecanoyl-(R)-carnitine + CoA. Its pathway is lipid metabolism; fatty acid beta-oxidation. In terms of biological role, catalyzes the transfer of the acyl group of long-chain fatty acid-CoA conjugates onto carnitine, an essential step for the mitochondrial uptake of long-chain fatty acids and their subsequent beta-oxidation in the mitochondrion. This chain is Carnitine O-palmitoyltransferase 1, muscle isoform (CPT1B), found in Homo sapiens (Human).